Reading from the N-terminus, the 246-residue chain is DNA repair protein RecO (246 aa).

It belongs to the RecO family.

In terms of biological role, involved in DNA repair and RecF pathway recombination. This chain is DNA repair protein RecO, found in Maridesulfovibrio salexigens (strain ATCC 14822 / DSM 2638 / NCIMB 8403 / VKM B-1763) (Desulfovibrio salexigens).